Reading from the N-terminus, the 153-residue chain is NAD(P)H-quinone oxidoreductase subunit N (153 aa).

It belongs to the complex I NdhN subunit family. In terms of assembly, NDH-1 can be composed of about 15 different subunits; different subcomplexes with different compositions have been identified which probably have different functions.

The protein localises to the cellular thylakoid membrane. It carries out the reaction a plastoquinone + NADH + (n+1) H(+)(in) = a plastoquinol + NAD(+) + n H(+)(out). The catalysed reaction is a plastoquinone + NADPH + (n+1) H(+)(in) = a plastoquinol + NADP(+) + n H(+)(out). Functionally, NDH-1 shuttles electrons from an unknown electron donor, via FMN and iron-sulfur (Fe-S) centers, to quinones in the respiratory and/or the photosynthetic chain. The immediate electron acceptor for the enzyme in this species is believed to be plastoquinone. Couples the redox reaction to proton translocation, and thus conserves the redox energy in a proton gradient. Cyanobacterial NDH-1 also plays a role in inorganic carbon-concentration. In Synechococcus sp. (strain RCC307), this protein is NAD(P)H-quinone oxidoreductase subunit N.